Consider the following 127-residue polypeptide: Large ribosomal subunit protein bL21 (127 aa).

Belongs to the bacterial ribosomal protein bL21 family. As to quaternary structure, part of the 50S ribosomal subunit. Contacts protein L20.

Functionally, this protein binds to 23S rRNA in the presence of protein L20. This is Large ribosomal subunit protein bL21 from Blochmanniella floridana.